We begin with the raw amino-acid sequence, 134 residues long: Lymphocyte antigen 6A-2/6E-1 (134 aa).

An N-terminal signal peptide occupies residues 1–26 (MDTSHTTKSCLLILLVALLCAERAQG). Residues 27–119 (LECYQCYGVP…NGGSTWTMAG (93 aa)) form the UPAR/Ly6 domain. Cystine bridges form between Cys-29–Cys-53, Cys-32–Cys-41, Cys-46–Cys-74, Cys-78–Cys-98, and Cys-99–Cys-104. Residue Gly-112 is the site of GPI-anchor amidated glycine attachment. The propeptide at 113-134 (STWTMAGVLLFSLSSVLLQTLL) is removed in mature form.

O-glycosylated. Not N-glycosylated. In terms of processing, not phosphorylated. In terms of tissue distribution, widely expressed.

It localises to the cell membrane. Its function is as follows. T-cell activation. In Mus musculus (Mouse), this protein is Lymphocyte antigen 6A-2/6E-1 (Ly6a).